A 288-amino-acid chain; its full sequence is Protein PGR (288 aa).

7 helical membrane passes run 1–21 (METS…LIAF), 29–49 (LDLS…TAGF), 91–111 (VLCN…LTGW), 123–143 (IVTA…GDTW), 177–197 (LLAA…FGLF), 210–230 (LLVI…DSIL), and 268–288 (VNFV…VYIF).

The protein belongs to the TMEM19 family. In terms of tissue distribution, expressed in the vasculature of leaves, roots, inflorescences, siliques, anther filaments and sepals. Detected primarily in the phloem tissues, including in the root ans shoot apical meristems.

It is found in the cell membrane. In terms of biological role, involved in the glucose-triggered developmental leaf growth process. The polypeptide is Protein PGR (Arabidopsis thaliana (Mouse-ear cress)).